Reading from the N-terminus, the 364-residue chain is Inner membrane ABC transporter permease protein YejB (364 aa).

At 1-8 the chain is on the periplasmic side; the sequence is MGAYLIRR. Residues 9 to 29 form a helical membrane-spanning segment; it reads LLLVIPTLWAIITINFFIVQI. Topologically, residues 30–37 are cytoplasmic; sequence APGGPVDQ. Residues 38 to 58 form a helical membrane-spanning segment; that stretch reads AIAAIEFGNAGVLPGAGGEGV. Topologically, residues 59–135 are periplasmic; the sequence is RASHAQTGVG…LTLIKDSLPV (77 aa). The ABC transmembrane type-1 domain maps to 133–348; that stretch reads LPVSITLGLW…LIGLLLNIVS (216 aa). Residues 136–156 traverse the membrane as a helical segment; that stretch reads SITLGLWSTLIIYLVSIPLGI. At 157 to 172 the chain is on the cytoplasmic side; that stretch reads RKAVYNGSRFDVWSSA. A helical membrane pass occupies residues 173 to 193; sequence FIIIGYAIPAFLFAILLIVFF. Topologically, residues 194 to 224 are periplasmic; that stretch reads AGGSYFDLFPLRGLVSANFDSLPWYQKITDY. A helical membrane pass occupies residues 225-245; that stretch reads LWHITLPVLATVIGGFAALTM. Residues 246-284 are Cytoplasmic-facing; it reads LTKNSFLDEVRKQYVVTARAKGVSEKNILWKHVFRNAML. The helical transmembrane segment at 285–305 threads the bilayer; that stretch reads LVIAGFPATFISMFFTGSLLI. Over 306 to 326 the chain is Periplasmic; the sequence is EVMFSLNGLGLLGYEATVSRD. Residues 327–347 traverse the membrane as a helical segment; the sequence is YPVMFGTLYIFTLIGLLLNIV. Over 348–364 the chain is Cytoplasmic; the sequence is SDISYTLVDPRIDFEGR.

The protein belongs to the binding-protein-dependent transport system permease family. OppBC subfamily.

The protein localises to the cell inner membrane. In terms of biological role, probably part of a binding-protein-dependent transport system. Probably responsible for the translocation of the substrate across the membrane. This is Inner membrane ABC transporter permease protein YejB (yejB) from Escherichia coli O157:H7.